Consider the following 241-residue polypeptide: Terpene cyclase pyr4 (241 aa).

A run of 7 helical transmembrane segments spans residues 20-40 (IADWALLAQGLGWSINYLAMI), 49-69 (YGMAILPLCCNFAWEFVYSVI), 79-99 (AVLTTWMILNLFVMYTAIKFA), 113-133 (LPWIFPVAIAAFTAGHLALAA), 141-161 (ANWGAFLCFELLTSGAVCQLM), 168-188 (GASYTIWLSRFLGSYIGGIFL), and 206-226 (FVTWHGLMCFSLDIAYVTFLW).

It belongs to the paxB family.

The protein resides in the membrane. The enzyme catalyses 2-oxo-3-[(8S)-epoxy-(2E,6E)-farnesyl]-6-(pyridin-3-yl)-2H-pyran-4-olate + H(+) = deacetylpyripyropene E. It participates in secondary metabolite biosynthesis; terpenoid biosynthesis. Functionally, terpene cyclase; part of the gene cluster that mediates the biosynthesis of pyripyropene A, a specific human acyl-coenzyme A:cholesterol acyltransferase 2 inhibitor. The first step of the pathway is the synthesis of nicotinyl-CoA from nicotinic acid by the nicotinic acid-CoA ligase pyr1. Nicotinyl-CoA is then a substrate of polyketide synthase pyr2 to produce 4-hydroxy-6-(3-pyridinyl)-2H-pyran-2-one (HPPO) which is further prenylated by the polyprenyl transferase pyr6 to yield farnesyl-HPPO. The next steps consist of an epoxidation of farnesyl-HPPO to epoxyfarnesyl-HPPO by FAD-dependent monooxygenase pyr5 and a cyclization of the terpenoid portion by the terpene cyclase pyr4 to yield deacetyl-pyripyropene E. The 2 cytochrome P450 monooxygenases pyr3 and pyr9, and the 2 acetyltransferases pyr7 and pyr8 are involved in the conversion of deacetyl-pyripyropene E into pyripyropene A through several cycles of oxidation and acetylation steps. Pyr7 acetylates deacetyl-pyripyropene E to pyripyropene E which is oxidized to 11-deacetyl-pyripyropene O by pyr3, which is in turn acetylated into pyripyropene O by pyr8. Pyripyropene O is then oxidized to deacetyl-pyripyropene A by pyr9. Deacetyl-pyripyropene A is finally acetylated to pyripyropene A by pyr8. This is Terpene cyclase pyr4 from Aspergillus fumigatus (strain ATCC MYA-4609 / CBS 101355 / FGSC A1100 / Af293) (Neosartorya fumigata).